The sequence spans 214 residues: Dynein axonemal assembly factor 6 (214 aa).

Disordered regions lie at residues 1–22 and 34–68; these read MESENMDSENMKTENMESQNVD and ALSKLLNPEEEDDSDYGQTNGLSTIGAMGPGNIGP.

Belongs to the PIH1 family. As to quaternary structure, interacts with HSPA1A/B and HSP90AA1. Interacts with DNAAF2 and DNAAF4. Interacts wuth DNAI2. In terms of tissue distribution, expressed in testis, small intestine, prostate, adrenal gland, spleen, lung, bladder, breast and ovary. Expressed in ciliated epithelial cells.

Its subcellular location is the cytoplasm. It is found in the golgi apparatus. The protein localises to the trans-Golgi network. In terms of biological role, plays a role in cytoplasmic pre-assembly of axonemal dynein. The polypeptide is Dynein axonemal assembly factor 6 (Homo sapiens (Human)).